Reading from the N-terminus, the 2222-residue chain is Protein SWEETIE (2222 aa).

10 HEAT repeats span residues 37–75 (LLCF…LVTL), 228–265 (SEFD…LGMH), 331–368 (SELQ…GVID), 510–540 (PARL…SEKE), 541–578 (AGWL…GNPE), 611–648 (CNDG…LVDI), 768–807 (QGML…GLKA), 898–936 (MALS…TIEA), 968–1008 (QGIG…WQEI), and 1029–1066 (VSVH…KDPV). The interval 1133–1165 (IAENDPAYTRENLGDDDEDMVSSSSGKSIRANP) is disordered. HEAT repeat units lie at residues 1238–1269 (MRPI…LLEQ), 1270–1306 (YQAQ…TSGI), 1312–1354 (VAVK…AHAS), 1372–1410 (VEFE…NLKK), 1434–1474 (EAWP…LEAE), 1550–1586 (DLCQ…NCPK), 1783–1820 (VMLK…RYNN), 1836–1874 (GDIV…HSIT), 1880–1917 (GFMS…LVSH), and 1966–2006 (AMDI…QVST). The tract at residues 1992-2203 (EALSTMPTSF…DESSKEHVGA (212 aa)) is disordered. Residues 1996-2009 (TMPTSFNQVSTVES) show a composition bias toward polar residues. The span at 2010–2027 (GTDEEEEEEEDDDDDDWD) shows a compositional bias: acidic residues. Residues 2028 to 2040 (TFQSFPASTNLEG) show a composition bias toward polar residues. Residues 2062–2072 (QDDESNAEETD) show a composition bias toward acidic residues. Composition is skewed to basic and acidic residues over residues 2073 to 2096 (DQHL…SKEV) and 2108 to 2124 (TRED…EETV). Residues 2150–2164 (NEQSVESKNLESENI) are compositionally biased toward polar residues. The span at 2191-2202 (SPEDESSKEHVG) shows a compositional bias: basic and acidic residues.

It belongs to the HEATR5 family.

Functionally, may regulate multiple metabolic, hormonal and stress-related pathways. Required for carbohydrate metabolism and homoeostasis. May also monitor ethylene biosynthesis and senescence. The protein is Protein SWEETIE of Arabidopsis thaliana (Mouse-ear cress).